Reading from the N-terminus, the 81-residue chain is Extracellular matrix regulatory protein B (81 aa).

In terms of biological role, regulates the biosynthesis of the extracellular matrix and the biofilm formation. May act as an enhancer of biofilm gene expression. Acts in parallel to the pathway that governs SinR derepression. This is Extracellular matrix regulatory protein B from Bacillus subtilis (strain 168).